Reading from the N-terminus, the 218-residue chain is Protein-methionine-sulfoxide reductase heme-binding subunit MsrQ (218 aa).

5 helical membrane passes run 14–34 (AVHA…WQVW), 60–80 (LLLI…AVLI), 86–106 (LGLY…WLDL), 121–141 (PYIT…ITST), and 155–175 (LHML…WLVK).

This sequence belongs to the MsrQ family. In terms of assembly, heterodimer of a catalytic subunit (MsrP) and a heme-binding subunit (MsrQ). Requires FMN as cofactor. Heme b serves as cofactor.

The protein localises to the cell inner membrane. Its function is as follows. Part of the MsrPQ system that repairs oxidized periplasmic proteins containing methionine sulfoxide residues (Met-O), using respiratory chain electrons. Thus protects these proteins from oxidative-stress damage caused by reactive species of oxygen and chlorine generated by the host defense mechanisms. MsrPQ is essential for the maintenance of envelope integrity under bleach stress, rescuing a wide series of structurally unrelated periplasmic proteins from methionine oxidation. MsrQ provides electrons for reduction to the reductase catalytic subunit MsrP, using the quinone pool of the respiratory chain. The protein is Protein-methionine-sulfoxide reductase heme-binding subunit MsrQ of Xanthomonas campestris pv. campestris (strain B100).